Consider the following 357-residue polypeptide: Guanine nucleotide-binding protein alpha-1 subunit (357 aa).

A lipid anchor (N-myristoyl glycine) is attached at Gly-2. Residue Cys-4 is the site of S-palmitoyl cysteine attachment. Residues 32 to 357 (NIIKLLLLGA…STKLKGCGLY (326 aa)) enclose the G-alpha domain. Positions 35–48 (KLLLLGAGESGKST) are G1 motif. The GTP site is built by Glu-43, Ser-44, Gly-45, Lys-46, Ser-47, Thr-48, Asp-151, Leu-176, Thr-182, Gly-204, Asn-270, Lys-271, Asp-273, and Ala-329. Ser-47 is a Mg(2+) binding site. The G2 motif stretch occupies residues 174-182 (DILHTRVPT). Thr-182 is a binding site for Mg(2+). The G3 motif stretch occupies residues 197–206 (FRVFDVGGQR). The interval 266–273 (ILFLNKID) is G4 motif. The tract at residues 327-332 (TCATDT) is G5 motif.

This sequence belongs to the G-alpha family. In terms of assembly, g proteins are composed of 3 units; alpha, beta and gamma. The alpha chain contains the guanine nucleotide binding site. It depends on Mg(2+) as a cofactor.

In terms of biological role, guanine nucleotide-binding proteins (G proteins) are involved as modulators or transducers in various transmembrane signaling systems. This chain is Guanine nucleotide-binding protein alpha-1 subunit (gpa-1), found in Caenorhabditis elegans.